A 146-amino-acid polypeptide reads, in one-letter code: UPF0306 protein HD_1359 (146 aa).

The protein belongs to the UPF0306 family.

The sequence is that of UPF0306 protein HD_1359 from Haemophilus ducreyi (strain 35000HP / ATCC 700724).